The sequence spans 326 residues: Phospholipid scramblase 4 (326 aa).

The segment at 1 to 32 (MSGLVPTAPEQPTEEMENQIKSPTAVPDAPPD) is disordered. Positions 1–94 (MSGLVPTAPE…PVTNQPAPIM (94 aa)) are proline-rich domain (PRD). The Cytoplasmic portion of the chain corresponds to 1–299 (MSGLVPTAPE…IRFPLALDVK (299 aa)). Residues 18-25 (NQIKSPTA) carry the SH3-binding 1 motif. Positions 30 to 33 (PPDY) match the PPxY motif motif. The short motif at 41 to 49 (PAGPVASPS) is the SH3-binding 2 element. Phosphotyrosine; by ABL is present on residues tyrosine 79 and tyrosine 84. An SH3-binding 3 motif is present at residues 94-102 (MWMAGPAPV). Residues cysteine 193, cysteine 194, cysteine 195, cysteine 197, and cysteine 198 are each lipidated (S-palmitoyl cysteine). The helical transmembrane segment at 300–316 (MKAMIFGSCFLIDFMYF) threads the bilayer. Over 317-326 (ERPPPRRMSR) the chain is Extracellular.

It belongs to the phospholipid scramblase family. In terms of assembly, interacts with PDCD6. Interacts with KPNA2; this interaction mediates the nucleus import of PLSCR4. Requires Ca(2+) as cofactor. It depends on Mg(2+) as a cofactor. Zn(2+) is required as a cofactor.

The protein localises to the cell membrane. The protein resides in the nucleus. It catalyses the reaction a 1,2-diacyl-sn-glycero-3-phosphocholine(in) = a 1,2-diacyl-sn-glycero-3-phosphocholine(out). It carries out the reaction a 1,2-diacyl-sn-glycero-3-phospho-L-serine(in) = a 1,2-diacyl-sn-glycero-3-phospho-L-serine(out). In terms of biological role, catalyzes metal ion-induced ATP-independent rapid bidirectional and non-specific movement of phospholipids (lipid scrambling or lipid flip-flop) between the inner and outer leaflet of the plasma membrane and participates in the redistribution of phospholipids between membrane leaflets. Metal ions bind to the calcium-binding site and induce conformation change in the protein. Has a greater affi nity for Ca(2+) than Mg(2+) and Zn(2+). This Mus musculus (Mouse) protein is Phospholipid scramblase 4.